Reading from the N-terminus, the 312-residue chain is tRNA dimethylallyltransferase (312 aa).

12 to 19 (GPTAIGKS) provides a ligand contact to ATP. Residue 14–19 (TAIGKS) coordinates substrate. Interaction with substrate tRNA regions lie at residues 38 to 41 (DSKL) and 162 to 166 (QRVLR).

It belongs to the IPP transferase family. As to quaternary structure, monomer. It depends on Mg(2+) as a cofactor.

It carries out the reaction adenosine(37) in tRNA + dimethylallyl diphosphate = N(6)-dimethylallyladenosine(37) in tRNA + diphosphate. Functionally, catalyzes the transfer of a dimethylallyl group onto the adenine at position 37 in tRNAs that read codons beginning with uridine, leading to the formation of N6-(dimethylallyl)adenosine (i(6)A). This Buchnera aphidicola subsp. Cinara cedri (strain Cc) protein is tRNA dimethylallyltransferase.